Here is an 894-residue protein sequence, read N- to C-terminus: Glutamate receptor 3 (894 aa).

Positions 1–28 (MARQKKMGQNVLRAVFFLVLGLLGHSHG) are cleaved as a signal peptide. Residues 29–552 (GFPNTISIGG…GVFSFLDPLA (524 aa)) are Extracellular-facing. N-linked (GlcNAc...) asparagine glycans are attached at residues Asn63, Asn266, Asn380, Asn415, and Asn422. The cysteines at positions 91 and 340 are disulfide-linked. 3 residues coordinate L-glutamate: Pro508, Thr510, and Arg515. A helical transmembrane segment spans residues 553-573 (YEIWMCIVFASIGVSVVLFLV). At 574–602 (SRFSPYEWHLEDNNEEPRDPQSPPDPPNE) the chain is on the cytoplasmic side. Residues 603-618 (FGIFNSLWFSLGAFMQ) constitute an intramembrane region (helical; Pore-forming). The stretch at 619-621 (QGC) is an intramembrane region. A lipid anchor (S-palmitoyl cysteine) is attached at Cys621. Over 622–627 (DISPRS) the chain is Cytoplasmic. Residues 628 to 648 (LSGRIVGGVWWFFTLIIISSY) traverse the membrane as a helical segment. The Extracellular segment spans residues 649–823 (TANLAAFLTV…DKTSALSLSN (175 aa)). Ser686, Thr687, and Glu737 together coordinate L-glutamate. A disulfide bridge connects residues Cys750 and Cys805. A helical membrane pass occupies residues 824-844 (VAGVFYILVGGLGLAMMVALI). Topologically, residues 845 to 894 (EFCYKSRAESKRMKLTKNTQNFKPAPATNTQNYATYREGYNVYGTESVKI) are cytoplasmic. The S-palmitoyl cysteine moiety is linked to residue Cys847. Phosphotyrosine occurs at positions 877 and 887.

It belongs to the glutamate-gated ion channel (TC 1.A.10.1) family. GRIA3 subfamily. In terms of assembly, homotetramer or heterotetramer of pore-forming glutamate receptor subunits. Tetramers may be formed by the dimerization of dimers. Interacts with PICK1, GRIP1 and GRIP2. Found in a complex with GRIA1, GRIA2, GRIA4, CNIH2, CNIH3, CACNG2, CACNG3, CACNG4, CACNG5, CACNG7 and CACNG8. Interacts with CACNG5. Found in a complex with GRIA1, GRIA2, GRIA4, DLG4, CACNG8 and CNIH2.

The protein resides in the cell membrane. The protein localises to the postsynaptic cell membrane. It localises to the postsynaptic density membrane. It carries out the reaction Ca(2+)(in) = Ca(2+)(out). Ionotropic glutamate receptor that functions as a ligand-gated cation channel, gated by L-glutamate and glutamatergic agonists such as alpha-amino-3-hydroxy-5-methyl-4-isoxazolepropionic acid (AMPA), quisqualic acid, and kainic acid. L-glutamate acts as an excitatory neurotransmitter at many synapses in the central nervous system and plays an important role in fast excitatory synaptic transmission by inducing long-term potentiation. Binding of the excitatory neurotransmitter L-glutamate induces a conformation change, leading to the opening of the cation channel, and thereby converts the chemical signal to an electrical impulse upon entry of calcium. The receptor then desensitizes rapidly and enters a transient inactive state, characterized by the presence of bound agonist. In the presence of CACNG8, shows resensitization which is characterized by a delayed accumulation of current flux upon continued application of glutamate. This chain is Glutamate receptor 3, found in Macaca fascicularis (Crab-eating macaque).